Reading from the N-terminus, the 433-residue chain is Methylenetetrahydrofolate--tRNA-(uracil-5-)-methyltransferase TrmFO (433 aa).

Residue 8–13 (GAGLAG) coordinates FAD.

This sequence belongs to the MnmG family. TrmFO subfamily. The cofactor is FAD.

The protein resides in the cytoplasm. It carries out the reaction uridine(54) in tRNA + (6R)-5,10-methylene-5,6,7,8-tetrahydrofolate + NADH + H(+) = 5-methyluridine(54) in tRNA + (6S)-5,6,7,8-tetrahydrofolate + NAD(+). The enzyme catalyses uridine(54) in tRNA + (6R)-5,10-methylene-5,6,7,8-tetrahydrofolate + NADPH + H(+) = 5-methyluridine(54) in tRNA + (6S)-5,6,7,8-tetrahydrofolate + NADP(+). Functionally, catalyzes the folate-dependent formation of 5-methyl-uridine at position 54 (M-5-U54) in all tRNAs. In Carboxydothermus hydrogenoformans (strain ATCC BAA-161 / DSM 6008 / Z-2901), this protein is Methylenetetrahydrofolate--tRNA-(uracil-5-)-methyltransferase TrmFO.